Here is a 320-residue protein sequence, read N- to C-terminus: Protease HtpX homolog (320 aa).

Helical transmembrane passes span 6–26 (TAML…LIGG) and 28–48 (AGMM…YWNS). His130 contributes to the Zn(2+) binding site. The active site involves Glu131. His134 is a Zn(2+) binding site. 2 consecutive transmembrane segments (helical) span residues 145–165 (ITAT…FFGG) and 173–193 (PLGF…AMLV). Glu202 contributes to the Zn(2+) binding site. The tract at residues 281–320 (GGMNVSTPPVRAANPSRKSRSVPDTGLGRGGSQPPKGPWS) is disordered.

This sequence belongs to the peptidase M48B family. The cofactor is Zn(2+).

The protein localises to the cell inner membrane. The protein is Protease HtpX homolog of Rhizobium leguminosarum bv. trifolii (strain WSM2304).